Consider the following 331-residue polypeptide: Ketol-acid reductoisomerase (NADP(+)) (331 aa).

Residues Ala-2–Thr-182 form the KARI N-terminal Rossmann domain. NADP(+) is bound by residues Tyr-25 to Gln-28, Ser-51, Ser-53, and Asp-83 to Gln-86. His-108 is a catalytic residue. Gly-134 is a binding site for NADP(+). The region spanning Ser-183–Leu-328 is the KARI C-terminal knotted domain. Mg(2+)-binding residues include Asp-191, Glu-195, Glu-227, and Glu-231. Ser-252 is a substrate binding site.

It belongs to the ketol-acid reductoisomerase family. Mg(2+) is required as a cofactor.

The enzyme catalyses (2R)-2,3-dihydroxy-3-methylbutanoate + NADP(+) = (2S)-2-acetolactate + NADPH + H(+). It catalyses the reaction (2R,3R)-2,3-dihydroxy-3-methylpentanoate + NADP(+) = (S)-2-ethyl-2-hydroxy-3-oxobutanoate + NADPH + H(+). Its pathway is amino-acid biosynthesis; L-isoleucine biosynthesis; L-isoleucine from 2-oxobutanoate: step 2/4. The protein operates within amino-acid biosynthesis; L-valine biosynthesis; L-valine from pyruvate: step 2/4. Functionally, involved in the biosynthesis of branched-chain amino acids (BCAA). Catalyzes an alkyl-migration followed by a ketol-acid reduction of (S)-2-acetolactate (S2AL) to yield (R)-2,3-dihydroxy-isovalerate. In the isomerase reaction, S2AL is rearranged via a Mg-dependent methyl migration to produce 3-hydroxy-3-methyl-2-ketobutyrate (HMKB). In the reductase reaction, this 2-ketoacid undergoes a metal-dependent reduction by NADPH to yield (R)-2,3-dihydroxy-isovalerate. The chain is Ketol-acid reductoisomerase (NADP(+)) from Gloeothece citriformis (strain PCC 7424) (Cyanothece sp. (strain PCC 7424)).